Here is a 176-residue protein sequence, read N- to C-terminus: Translation initiation factor IF-3 (176 aa).

The protein belongs to the IF-3 family. Monomer.

The protein resides in the cytoplasm. Functionally, IF-3 binds to the 30S ribosomal subunit and shifts the equilibrium between 70S ribosomes and their 50S and 30S subunits in favor of the free subunits, thus enhancing the availability of 30S subunits on which protein synthesis initiation begins. In Streptococcus agalactiae serotype Ia (strain ATCC 27591 / A909 / CDC SS700), this protein is Translation initiation factor IF-3.